A 332-amino-acid chain; its full sequence is Large ribosomal subunit protein uL10 (332 aa).

The tract at residues 294–332 (QAAAAPVAVEDNTEEPEEEEEEEEDAAESAAAGLGALFG) is disordered. Residues 304-320 (DNTEEPEEEEEEEEDAA) are compositionally biased toward acidic residues.

It belongs to the universal ribosomal protein uL10 family. In terms of assembly, part of the 50S ribosomal subunit. Forms part of the ribosomal stalk which helps the ribosome interact with GTP-bound translation factors. Forms a heptameric L10(L12)2(L12)2(L12)2 complex, where L10 forms an elongated spine to which the L12 dimers bind in a sequential fashion.

Functionally, forms part of the ribosomal stalk, playing a central role in the interaction of the ribosome with GTP-bound translation factors. The polypeptide is Large ribosomal subunit protein uL10 (Methanosphaera stadtmanae (strain ATCC 43021 / DSM 3091 / JCM 11832 / MCB-3)).